Reading from the N-terminus, the 142-residue chain is Hemoglobin anodic subunit alpha (142 aa).

The residue at position 1 (S1) is an N-acetylserine. Positions 1–142 (SLSTKDKAVV…LALALADRYR (142 aa)) constitute a Globin domain. H59 is a binding site for O2. Heme b is bound at residue H88.

Belongs to the globin family. As to quaternary structure, heterotetramer of two alpha chains and two beta chains. As to expression, red blood cells.

Functionally, involved in oxygen transport from gills to the various peripheral tissues. The sequence is that of Hemoglobin anodic subunit alpha from Gymnothorax unicolor (Brown moray).